The following is a 463-amino-acid chain: uncharacterized protein (463 aa).

The 59-residue stretch at valine 9–lysine 67 folds into the TRAM domain. Residues cysteine 80, cysteine 86, cysteine 89, and cysteine 169 each coordinate [4Fe-4S] cluster. 4 residues coordinate S-adenosyl-L-methionine: glutamine 293, tyrosine 322, aspartate 343, and aspartate 391. Cysteine 418 (nucleophile) is an active-site residue.

This sequence belongs to the class I-like SAM-binding methyltransferase superfamily. RNA M5U methyltransferase family.

This is an uncharacterized protein from Halalkalibacterium halodurans (strain ATCC BAA-125 / DSM 18197 / FERM 7344 / JCM 9153 / C-125) (Bacillus halodurans).